The primary structure comprises 474 residues: Stabilizer of axonemal microtubules 1 (474 aa).

Mn stretches follow at residues 30–64 (KPCLLSEYTENYPCYHSYLPRESFKPRREYQKGSI), 65–97 (PMEGLTTSRRDFGPHKVAPVKAHQYDQFVPSEE), 98–131 (NMDLLTTYKKDYNPYTVCRVDPIKPRDSKYPYSN), 132–165 (KMEYLPTYKADYLPWNQPRRQPLRLEHKYQPASV), 166–199 (RFDNRTTHQDDYPIKGLVKTVSCKPLAMPKLCNI), 200–232 (PLEDVTNYKMSYVAHPVEKRFVHEAEKFRPCEI), 233–266 (PFESLTTHKQSYRGLMGEPAKSLKPLARPPGLDM), 267–299 (PFSNTTEFRDKYQAWPTPQMFSKAPITYVPPED), 300–332 (SMDLLTTVQAHYTYPKGVPARSCRPAPQIRKSG), 333–366 (RFEGSSTTKDDYKQWSSMRTEPVKPIPQLDFPTE), 367–400 (PLDCLTTTRAHYVPHPPINTKSCKPHWSGPRGNV), and 401–434 (PVEGQTTYTISFTPKEMSKCLASYPEPPGYTFEE). The interval 318-350 (PARSCRPAPQIRKSGRFEGSSTTKDDYKQWSSM) is disordered. The tract at residues 444–474 (KPVSQAGSQQSSHLSVDDSENPSQRKLEVSA) is disordered. Positions 448-457 (QAGSQQSSHL) are enriched in polar residues.

Belongs to the FAM154 family. As to quaternary structure, associates with microtubules via the Mn regions.

It localises to the cytoplasm. The protein resides in the cytoskeleton. The protein localises to the microtubule organizing center. It is found in the centrosome. Its subcellular location is the centriole. It localises to the cilium basal body. The protein resides in the cilium axoneme. The protein localises to the flagellum axoneme. Functionally, may play a role in the regulation of cilium length. Stabilizes microtubules at low temperature. In Macaca fascicularis (Crab-eating macaque), this protein is Stabilizer of axonemal microtubules 1 (SAXO1).